Reading from the N-terminus, the 736-residue chain is 1,4-alpha-glucan branching enzyme GlgB (736 aa).

Asp-415 serves as the catalytic Nucleophile. Residue Glu-468 is the Proton donor of the active site.

This sequence belongs to the glycosyl hydrolase 13 family. GlgB subfamily. As to quaternary structure, monomer.

It carries out the reaction Transfers a segment of a (1-&gt;4)-alpha-D-glucan chain to a primary hydroxy group in a similar glucan chain.. It functions in the pathway glycan biosynthesis; glycogen biosynthesis. Its function is as follows. Catalyzes the formation of the alpha-1,6-glucosidic linkages in glycogen by scission of a 1,4-alpha-linked oligosaccharide from growing alpha-1,4-glucan chains and the subsequent attachment of the oligosaccharide to the alpha-1,6 position. In Rhodopirellula baltica (strain DSM 10527 / NCIMB 13988 / SH1), this protein is 1,4-alpha-glucan branching enzyme GlgB.